A 233-amino-acid polypeptide reads, in one-letter code: MTVTRNGCRIFPKLHYEVHGLVADKCYSMVFHIAAQFKEPKFICHPAGIKMGALWTSRTISFEDFFITTNPQPTDNSMIHLPPHCKFTPILDVYEVVLDHMQQPATMHRVSSCRLPYTFMTVTMYKNREARVLKLGMNPHARHFLKNNTNKNHLDTASLIPPIPSVQPLPLFPLPQNSMSYTFSYDTYPSNIHVAPIQLPFPFPAVLSTLASSLQLCRDGDPEEIDEEIDIMN.

The segment at residues 1–146 is a DNA-binding region (T-box); sequence MTVTRNGCRI…MNPHARHFLK (146 aa).

It localises to the nucleus. The protein is Putative T-box protein 41 (tbx-41) of Caenorhabditis elegans.